The following is a 359-amino-acid chain: UDP-N-acetylglucosamine--N-acetylmuramyl-(pentapeptide) pyrophosphoryl-undecaprenol N-acetylglucosamine transferase (359 aa).

Residues 14–16, N126, R166, S194, I248, and Q293 contribute to the UDP-N-acetyl-alpha-D-glucosamine site; that span reads TGG.

It belongs to the glycosyltransferase 28 family. MurG subfamily.

It localises to the cell inner membrane. It catalyses the reaction di-trans,octa-cis-undecaprenyl diphospho-N-acetyl-alpha-D-muramoyl-L-alanyl-D-glutamyl-meso-2,6-diaminopimeloyl-D-alanyl-D-alanine + UDP-N-acetyl-alpha-D-glucosamine = di-trans,octa-cis-undecaprenyl diphospho-[N-acetyl-alpha-D-glucosaminyl-(1-&gt;4)]-N-acetyl-alpha-D-muramoyl-L-alanyl-D-glutamyl-meso-2,6-diaminopimeloyl-D-alanyl-D-alanine + UDP + H(+). Its pathway is cell wall biogenesis; peptidoglycan biosynthesis. In terms of biological role, cell wall formation. Catalyzes the transfer of a GlcNAc subunit on undecaprenyl-pyrophosphoryl-MurNAc-pentapeptide (lipid intermediate I) to form undecaprenyl-pyrophosphoryl-MurNAc-(pentapeptide)GlcNAc (lipid intermediate II). This is UDP-N-acetylglucosamine--N-acetylmuramyl-(pentapeptide) pyrophosphoryl-undecaprenol N-acetylglucosamine transferase from Verminephrobacter eiseniae (strain EF01-2).